A 496-amino-acid polypeptide reads, in one-letter code: DEAD-box ATP-dependent RNA helicase 38 (496 aa).

Residues 1-91 (MADTVEKVPT…SGDTPYTSAS (91 aa)) form a disordered region. The residue at position 2 (A2) is an N-acetylalanine. Over residues 7–25 (KVPTVVESSSSSTVEASNS) the composition is skewed to low complexity. Residues 27–40 (EKTEPTTEKKKWGD) are compositionally biased toward basic and acidic residues. A compositionally biased stretch (acidic residues) spans 41-51 (VEDDDDEEEAV). Residues 78–91 (KAVTSGDTPYTSAS) are compositionally biased toward polar residues. The short motif at 91–120 (SRFEDLNLSPELMKGLYVEMKFEKPSKIQA) is the Q motif element. A Helicase ATP-binding domain is found at 125-301 (MIMTPPHKHL…ARTVKDPNQL (177 aa)). 138–145 (AHNGSGKT) contacts ATP. The DEAD box motif lies at 245-248 (DEAD). Residues 329–483 (VIKDQIMELG…EIKSWNSEEE (155 aa)) form the Helicase C-terminal domain.

It belongs to the DEAD box helicase family. DDX19/DBP5 subfamily. As to quaternary structure, interacts with NUP214 (via N-terminus). As to expression, constitutively expressed.

The protein resides in the cytoplasm. The protein localises to the nucleus. It catalyses the reaction ATP + H2O = ADP + phosphate + H(+). Its function is as follows. ATP-dependent RNA helicase essential for mRNA export from the nucleus. Plays an important role in the positive regulation of CBF/DREB transcription factors. The protein is DEAD-box ATP-dependent RNA helicase 38 (RH38) of Arabidopsis thaliana (Mouse-ear cress).